The sequence spans 67 residues: Small ribosomal subunit protein eS17 (67 aa).

This sequence belongs to the eukaryotic ribosomal protein eS17 family.

This chain is Small ribosomal subunit protein eS17, found in Haloquadratum walsbyi (strain DSM 16790 / HBSQ001).